Reading from the N-terminus, the 354-residue chain is Arginase-2, mitochondrial (354 aa).

The N-terminal 22 residues, 1–22, are a transit peptide targeting the mitochondrion; that stretch reads MSLRSHLSRLLRTQVHSVRKKS. Mn(2+) is bound by residues H120, D143, H145, and D147. Residues 145–149, 156–158, and D202 each bind substrate; these read HADIN and SGN. Residues D251 and D253 each coordinate Mn(2+). Substrate-binding residues include T265 and E296. Residues 332–354 are disordered; sequence IVYDQLPTPSSPDESESEERVRI.

It belongs to the arginase family. As to quaternary structure, homotrimer. Requires Mn(2+) as cofactor.

Its subcellular location is the mitochondrion. The catalysed reaction is L-arginine + H2O = urea + L-ornithine. The protein operates within nitrogen metabolism; urea cycle; L-ornithine and urea from L-arginine: step 1/1. Functionally, may play a role in the regulation of extra-urea cycle arginine metabolism and also in down-regulation of nitric oxide synthesis. Extrahepatic arginase functions to regulate L-arginine bioavailability to nitric oxid synthase (NOS). Arginine metabolism is a critical regulator of innate and adaptive immune responses. Seems to be involved in negative regulation of the survival capacity of activated T cells. May suppress inflammation-related signaling in asthmatic airway epithelium. May play a role in promoting prenatal immune suppression. Regulates RPS6KB1 signaling, which promotes endothelial cell senescence and inflammation and implicates NOS3/eNOS dysfunction. Can inhibit endothelial autophagy independently of its enzymatic activity implicating mTORC2 signaling. Involved in vascular smooth muscle cell senescence and apoptosis independently of its enzymatic activity. This Bos taurus (Bovine) protein is Arginase-2, mitochondrial (ARG2).